A 1279-amino-acid chain; its full sequence is Amylopullulanase (1279 aa).

The first 35 residues, 1–35 (MYKKLFTKKFISFVMSLLLVLTAAFSSMPFHNVYA), serve as a signal peptide directing secretion. Ca(2+)-binding residues include Asp248, Asn250, Asp288, Asp343, Asn401, Asp403, Asn406, Asp407, Gly452, and Asp454. Substrate contacts are provided by His527 and Arg627. Asp629 functions as the Nucleophile in the catalytic mechanism. The active-site Proton donor is the Glu658. Residues 734–735 (HD), Asp794, and Arg798 contribute to the substrate site. 2 Fibronectin type-III domains span residues 930 to 1022 (APQV…AYPI) and 1158 to 1252 (KPTA…VVPI).

It belongs to the glycosyl hydrolase 13 family. It depends on Ca(2+) as a cofactor.

It catalyses the reaction Endohydrolysis of (1-&gt;4)-alpha-D-glucosidic linkages in polysaccharides containing three or more (1-&gt;4)-alpha-linked D-glucose units.. It carries out the reaction Hydrolysis of (1-&gt;6)-alpha-D-glucosidic linkages in pullulan, amylopectin and glycogen, and in the alpha- and beta-limit dextrins of amylopectin and glycogen.. This is Amylopullulanase (apu) from Thermoanaerobacterium saccharolyticum.